The primary structure comprises 229 residues: Orotidine 5'-phosphate decarboxylase (229 aa).

Residues Asp11, Lys33, 61–70 (DMKLFDISAT), Thr116, Arg179, Gln188, Gly208, and Arg209 contribute to the substrate site. Lys63 acts as the Proton donor in catalysis.

This sequence belongs to the OMP decarboxylase family. Type 1 subfamily. In terms of assembly, homodimer.

It catalyses the reaction orotidine 5'-phosphate + H(+) = UMP + CO2. It participates in pyrimidine metabolism; UMP biosynthesis via de novo pathway; UMP from orotate: step 2/2. In terms of biological role, catalyzes the decarboxylation of orotidine 5'-monophosphate (OMP) to uridine 5'-monophosphate (UMP). This is Orotidine 5'-phosphate decarboxylase from Jannaschia sp. (strain CCS1).